Reading from the N-terminus, the 299-residue chain is NAD-dependent protein deacetylase 1 (299 aa).

The 278-residue stretch at 15-292 (LPPGTTDLAP…TTVADRLGLR (278 aa)) folds into the Deacetylase sirtuin-type domain. NAD(+) contacts are provided by residues 39–59 (GAGI…GSLS) and 117–120 (QNVD). The Proton acceptor role is filled by His-135. Cys-143, Cys-146, Cys-194, and Cys-197 together coordinate Zn(2+). NAD(+) contacts are provided by residues 234–236 (GSS) and Leu-278.

Belongs to the sirtuin family. Class II subfamily. It depends on Zn(2+) as a cofactor.

Its subcellular location is the cytoplasm. The enzyme catalyses N(6)-acetyl-L-lysyl-[protein] + NAD(+) + H2O = 2''-O-acetyl-ADP-D-ribose + nicotinamide + L-lysyl-[protein]. In terms of biological role, NAD-dependent protein deacetylase which modulates the activities of several enzymes which are inactive in their acetylated form. In Streptomyces coelicolor (strain ATCC BAA-471 / A3(2) / M145), this protein is NAD-dependent protein deacetylase 1.